A 249-amino-acid polypeptide reads, in one-letter code: uncharacterized protein (249 aa).

Residues 1–25 form the signal peptide; the sequence is MRYLNTKNIIAAGVLLSCMSSIAWG.

This sequence belongs to the periplasmic pilus chaperone family.

Its subcellular location is the periplasm. Its function is as follows. Could be required for the biogenesis of a putative fimbria. This is an uncharacterized protein from Escherichia coli (strain K12).